We begin with the raw amino-acid sequence, 1212 residues long: DNA-directed RNA polymerase subunit beta' (1212 aa).

4 residues coordinate Zn(2+): Cys60, Cys62, Cys75, and Cys78. Mg(2+)-binding residues include Asp450, Asp452, and Asp454. Zn(2+) is bound by residues Cys819, Cys893, Cys900, and Cys903.

Belongs to the RNA polymerase beta' chain family. In terms of assembly, the RNAP catalytic core consists of 2 alpha, 1 beta, 1 beta' and 1 omega subunit. When a sigma factor is associated with the core the holoenzyme is formed, which can initiate transcription. Mg(2+) is required as a cofactor. The cofactor is Zn(2+).

The enzyme catalyses RNA(n) + a ribonucleoside 5'-triphosphate = RNA(n+1) + diphosphate. Its function is as follows. DNA-dependent RNA polymerase catalyzes the transcription of DNA into RNA using the four ribonucleoside triphosphates as substrates. The sequence is that of DNA-directed RNA polymerase subunit beta' from Streptococcus uberis (strain ATCC BAA-854 / 0140J).